The following is a 405-amino-acid chain: Teichoic acid D-alanyltransferase (405 aa).

Residues 1–9 lie on the Extracellular side of the membrane; sequence MLNLQPYEN. A helical membrane pass occupies residues 10–29; that stretch reads PQYFVYLIIALLPVIIGMFK. The Cytoplasmic segment spans residues 30 to 33; that stretch reads GFRM. Residues 34 to 49 traverse the membrane as a helical segment; it reads HWYESIFSLVFLVLIF. Over 50-53 the chain is Extracellular; the sequence is DADK. Residues 54 to 80 traverse the membrane as a helical segment; sequence WPQGKALLGYVVFNLLLVYAYFKYRTR. The Cytoplasmic portion of the chain corresponds to 81 to 86; it reads EGSKNS. Residues 87–111 traverse the membrane as a helical segment; sequence TAVFYLSVALGIAHVAVVKFTPLFQ. The Extracellular segment spans residues 112 to 121; that stretch reads HHGSILGFLG. A helical transmembrane segment spans residues 122-138; that stretch reads ISYLTFRVVGTIMEIRD. Residues 139-145 are Cytoplasmic-facing; the sequence is GSIKDLN. The stretch at 146-175 is an intramembrane region; sequence MWKFIQFLLFFPTISSGPIDRYRRFVKDYD. At 176-179 the chain is on the cytoplasmic side; it reads RVPD. The helical transmembrane segment at 180–223 threads the bilayer; it reads PEHYAQLVTKAIHYLMLGFLYKFILGYIFGTLWLPSVEHMAMAS. Residues 224-232 lie on the Extracellular side of the membrane; the sequence is RGGAFLGLS. Residues 233 to 264 traverse the membrane as a helical segment; sequence WPVVGVMYAYSGYLFFDFAGYSLFAVAISYLM. Residues 265 to 274 lie on the Cytoplasmic side of the membrane; sequence GIETPMNFNK. The stretch at 275–310 is an intramembrane region; the sequence is PWSHITSRLLNRWQLSLSFWFRDYIYMRFVFFMMKH. The Cytoplasmic portion of the chain corresponds to 311–315; the sequence is KWIKS. The chain crosses the membrane as a helical span at residues 316 to 335; the sequence is RVWTAFVGYLVLFLIMGIWH. H335 is a catalytic residue. At 336–338 the chain is on the extracellular side; it reads GET. Residues 339–372 traverse the membrane as a helical segment; that stretch reads WYYIVYGLFHAMLINLTDAWLRFKKKHKDFFPHN. At 373–378 the chain is on the cytoplasmic side; the sequence is RATHYP. Residues 379–399 traverse the membrane as a helical segment; it reads SPFSMTANAVCFSFLIFSGFL. The Extracellular segment spans residues 400–405; it reads DKLWFH.

It belongs to the membrane-bound acyltransferase family.

Its subcellular location is the cell membrane. The protein operates within cell wall biogenesis; lipoteichoic acid biosynthesis. O-acyltransferase that catalyzes D-alanylation of both teichoic acid and lipoteichoic acid (LTA). D-alanylation of LTA plays an important role in modulating the properties of the cell wall in Gram-positive bacteria, influencing the net charge of the cell wall. Catalyzes D-alanylation from DltC carrier protein. The protein is Teichoic acid D-alanyltransferase of Lacticaseibacillus rhamnosus (Lactobacillus rhamnosus).